A 255-amino-acid polypeptide reads, in one-letter code: Hemin import ATP-binding protein HmuV (255 aa).

The region spanning 2–238 (LRVENLSIRR…EPLRAVFGLE (237 aa)) is the ABC transporter domain. Residue 34–41 (GPNGAGKS) coordinates ATP.

The protein belongs to the ABC transporter superfamily. Heme (hemin) importer (TC 3.A.1.14.5) family. In terms of assembly, the complex is composed of two ATP-binding proteins (HmuV), two transmembrane proteins (HmuU) and a solute-binding protein (HmuT).

The protein resides in the cell inner membrane. Part of the ABC transporter complex HmuTUV involved in hemin import. Responsible for energy coupling to the transport system. The chain is Hemin import ATP-binding protein HmuV from Pseudomonas aeruginosa (strain ATCC 15692 / DSM 22644 / CIP 104116 / JCM 14847 / LMG 12228 / 1C / PRS 101 / PAO1).